Reading from the N-terminus, the 717-residue chain is MIYQSPTIEVELLEDNIAHLCFKAQGSVNKFDRETIDSLNAALDSIKQDSSIKALMLSSAKDAFVVGADITEFLGLFAEEDTVLQSWLEQANVVFNKLEDLPFPTISAINGFALGAGCETILATDFRIADTTARIGLPETKLGIIPGFGGTVRLPRVIGADNALEWITSGKDQRPEAALKVGAIDAVVAPEQLKPAALKMLKDALIEKLDWQTRRAKKQAPLTLPKLEAMMSFATAKGMVFKVAGKHYPAPMAVISVIEQAAQLDRAGALQVEHQAFIKLAKTEVAQALIGIFLNDQLVKGKAKKAGKLAKKVNSAAVLGAGIMGGGIAYQSASKGTPIVMKDIAQPALDLGLGEAAKLLTAQVKRGRSTPAKMAAVLNNITPALDYAPVKDADVVVEAVVEHPKVKSMVLAEVEQHVSEDAIITSNTSTISINLLAKSLKKPERFCGMHFFNPVHKMPLVEVIRGENSSDETVASVVAYASKMGKTPIVVNDCPGFFVNRVLFPYFAGFSGLLADGADFAAIDKVMEKQFGWPMGPAYLLDVVGLDTGHHAQAVMAEGFPDRMGKTGKDAIDVMFEAERFGQKNSKGFYQYSVDRRGKPKKDLDPTSYELLQAEFGEQKAFESDEIIARTMIPMIIETVRCLEEGIIASPAEADMGLVYGLGFPPFRGGVFRYLDTMGVANFVALADKYAHLGGLYQVTDTMRELAANNGSYYQQA.

The segment at 1 to 189 (MIYQSPTIEV…KVGAIDAVVA (189 aa)) is enoyl-CoA hydratase/isomerase. Position 296 (aspartate 296) interacts with substrate. A 3-hydroxyacyl-CoA dehydrogenase region spans residues 311 to 717 (KKVNSAAVLG…ANNGSYYQQA (407 aa)). Residues methionine 324, aspartate 343, 400–402 (VVE), lysine 407, and serine 429 each bind NAD(+). Histidine 450 functions as the For 3-hydroxyacyl-CoA dehydrogenase activity in the catalytic mechanism. Asparagine 453 is an NAD(+) binding site. 2 residues coordinate substrate: asparagine 500 and tyrosine 660.

This sequence in the N-terminal section; belongs to the enoyl-CoA hydratase/isomerase family. It in the C-terminal section; belongs to the 3-hydroxyacyl-CoA dehydrogenase family. As to quaternary structure, heterotetramer of two alpha chains (FadB) and two beta chains (FadA).

It carries out the reaction a (3S)-3-hydroxyacyl-CoA + NAD(+) = a 3-oxoacyl-CoA + NADH + H(+). The enzyme catalyses a (3S)-3-hydroxyacyl-CoA = a (2E)-enoyl-CoA + H2O. It catalyses the reaction a 4-saturated-(3S)-3-hydroxyacyl-CoA = a (3E)-enoyl-CoA + H2O. The catalysed reaction is (3S)-3-hydroxybutanoyl-CoA = (3R)-3-hydroxybutanoyl-CoA. It carries out the reaction a (3Z)-enoyl-CoA = a 4-saturated (2E)-enoyl-CoA. The enzyme catalyses a (3E)-enoyl-CoA = a 4-saturated (2E)-enoyl-CoA. Its pathway is lipid metabolism; fatty acid beta-oxidation. Its function is as follows. Involved in the aerobic and anaerobic degradation of long-chain fatty acids via beta-oxidation cycle. Catalyzes the formation of 3-oxoacyl-CoA from enoyl-CoA via L-3-hydroxyacyl-CoA. It can also use D-3-hydroxyacyl-CoA and cis-3-enoyl-CoA as substrate. The protein is Fatty acid oxidation complex subunit alpha of Shewanella pealeana (strain ATCC 700345 / ANG-SQ1).